The chain runs to 158 residues: Dysbindin domain-containing protein 1 (158 aa).

Disordered stretches follow at residues 1 to 50 and 93 to 158; these read MEPP…VPAP and ADSD…PQED. Phosphoserine occurs at positions 95 and 119. Residues 125 to 141 are compositionally biased toward basic and acidic residues; sequence TRAEQSHEKQPLGDPER.

It belongs to the dysbindin family.

The sequence is that of Dysbindin domain-containing protein 1 (DBNDD1) from Homo sapiens (Human).